Here is a 270-residue protein sequence, read N- to C-terminus: Cell surface glycoprotein CD200 receptor 5 (270 aa).

A signal peptide spans 1-25 (MHALGRTPALTLLIFINIFVSGSRC). Topologically, residues 26–241 (TDKNQTIQND…STTTTTSLLT (216 aa)) are extracellular. Residues 39-145 (PLTQVNTTVS…GNFGRVYDLQ (107 aa)) enclose the Ig-like V-type domain. An N-linked (GlcNAc...) asparagine glycan is attached at Asn-44. 2 disulfides stabilise this stretch: Cys-59–Cys-129 and Cys-164–Cys-213. One can recognise an Ig-like C2-type domain in the interval 134–229 (PEGNFGRVYD…GNKSLFIELN (96 aa)). Asn-192 and Asn-221 each carry an N-linked (GlcNAc...) asparagine glycan. Residues 242–262 (ILYVKMVLLGIILLHVGFAFF) traverse the membrane as a helical segment. At 263 to 270 (QKRNVIRT) the chain is on the cytoplasmic side.

The protein belongs to the CD200R family.

The protein resides in the membrane. Its function is as follows. May not be a receptor for the CD200/OX2 cell surface glycoprotein. This chain is Cell surface glycoprotein CD200 receptor 5 (Cd200r5), found in Mus musculus (Mouse).